A 337-amino-acid polypeptide reads, in one-letter code: MKRIAVLTSGGDAPGMNAAIRAVVRKAISEGMEVYGINRGYAGMVDGDIFPLGSKEVGDKISRGGTFLYSARYPEFAQLEGQLAGIEQLKKHGIEGVVVIGGDGSYHGAMRLTEHGFPAVGIPGTIDNDIAGTDYTIGFDTAVNTAVEAIDKLRDTSSSHGRTFVVEVMGRNAGDIALWAGIASGADQIIVPEEEFDIHKVVSTIKDDFENRGKNHHIIVLAEGVMSGEAFAQQLKEAGDESDLRVTNLGHILRGGSPTARDRVIASWMGAHAVELLKEGKGGLAVGIRNEELVESPILGSAEDGALFSLTDEGNIVVNNPHKARLDYAALNRSLAQ.

Gly11 serves as a coordination point for ATP. 21-25 contacts ADP; that stretch reads RAVVR. Residues 72 to 73 and 102 to 105 each bind ATP; these read RY and GDGS. Asp103 contacts Mg(2+). A substrate-binding site is contributed by 125 to 127; sequence TID. The active-site Proton acceptor is Asp127. An ADP-binding site is contributed by Arg154. Substrate-binding positions include Arg162 and 169 to 171; that span reads MGR. Residues 185–187, Arg212, and 214–216 contribute to the ADP site; these read GAD and KNH. Substrate is bound by residues Glu223, Arg245, and 251–254; that span reads HILR.

This sequence belongs to the phosphofructokinase type A (PFKA) family. ATP-dependent PFK group I subfamily. Prokaryotic clade 'B1' sub-subfamily. Homotetramer. Requires Mg(2+) as cofactor.

The protein resides in the cytoplasm. The enzyme catalyses beta-D-fructose 6-phosphate + ATP = beta-D-fructose 1,6-bisphosphate + ADP + H(+). It participates in carbohydrate degradation; glycolysis; D-glyceraldehyde 3-phosphate and glycerone phosphate from D-glucose: step 3/4. With respect to regulation, allosterically activated by ADP and other diphosphonucleosides, and allosterically inhibited by phosphoenolpyruvate. Catalyzes the phosphorylation of D-fructose 6-phosphate to fructose 1,6-bisphosphate by ATP, the first committing step of glycolysis. This is ATP-dependent 6-phosphofructokinase from Streptococcus equi subsp. zooepidemicus (strain H70).